Reading from the N-terminus, the 270-residue chain is Probable 6-oxopurine nucleoside phosphorylase (270 aa).

Phosphate-binding positions include Ser-10 and 48 to 49; that span reads RH. Position 191 (Met-191) interacts with substrate. Position 192 (Thr-192) interacts with phosphate. 215–217 lines the substrate pocket; the sequence is NYA.

Belongs to the PNP/MTAP phosphorylase family. MTAP subfamily. As to quaternary structure, homohexamer. Dimer of a homotrimer.

The catalysed reaction is a purine D-ribonucleoside + phosphate = a purine nucleobase + alpha-D-ribose 1-phosphate. The protein operates within purine metabolism; purine nucleoside salvage. Its function is as follows. Purine nucleoside phosphorylase which is highly specific for 6-oxopurine nucleosides. Cleaves guanosine or inosine to respective bases and sugar-1-phosphate molecules. Involved in purine salvage. This Korarchaeum cryptofilum (strain OPF8) protein is Probable 6-oxopurine nucleoside phosphorylase.